A 345-amino-acid polypeptide reads, in one-letter code: Phosphoribosylformylglycinamidine cyclo-ligase (345 aa).

It belongs to the AIR synthase family.

It localises to the cytoplasm. It carries out the reaction 2-formamido-N(1)-(5-O-phospho-beta-D-ribosyl)acetamidine + ATP = 5-amino-1-(5-phospho-beta-D-ribosyl)imidazole + ADP + phosphate + H(+). It participates in purine metabolism; IMP biosynthesis via de novo pathway; 5-amino-1-(5-phospho-D-ribosyl)imidazole from N(2)-formyl-N(1)-(5-phospho-D-ribosyl)glycinamide: step 2/2. The protein is Phosphoribosylformylglycinamidine cyclo-ligase of Synechococcus sp. (strain CC9902).